Reading from the N-terminus, the 666-residue chain is Galactocerebrosidase (666 aa).

A signal peptide spans 1-22 (MIYKLYFAIALCFSLCFDLCIA). T91 is a binding site for substrate. A glycan (N-linked (GlcNAc...) asparagine) is linked at N125. Substrate-binding residues include W133 and N179. E180 acts as the Proton donor/acceptor in catalysis. Residue E256 is the Nucleophile of the active site. A disulfide bridge links C269 with C376. Residue N361 is glycosylated (N-linked (GlcNAc...) asparagine). Residue R378 participates in substrate binding. Residues N385, N390, N500, and N540 are each glycosylated (N-linked (GlcNAc...) asparagine).

Belongs to the glycosyl hydrolase 59 family.

The protein localises to the lysosome. It catalyses the reaction a beta-D-galactosyl-(1&lt;-&gt;1')-N-acylsphing-4-enine + H2O = an N-acylsphing-4-enine + D-galactose. The enzyme catalyses beta-D-galactosyl-(1&lt;-&gt;1)-sphing-4-enine + H2O = sphing-4-enine + D-galactose. The catalysed reaction is a D-galactosylceramide + H2O = an N-acyl-sphingoid base + D-galactose. Hydrolyzes the galactose ester bonds of glycolipids such as galactosylceramide and galactosylsphingosine. This chain is Galactocerebrosidase, found in Salmo salar (Atlantic salmon).